We begin with the raw amino-acid sequence, 180 residues long: Large ribosomal subunit protein uL5 (180 aa).

Belongs to the universal ribosomal protein uL5 family. Part of the 50S ribosomal subunit; part of the 5S rRNA/L5/L18/L25 subcomplex. Contacts the 5S rRNA and the P site tRNA. Forms a bridge to the 30S subunit in the 70S ribosome.

In terms of biological role, this is one of the proteins that bind and probably mediate the attachment of the 5S RNA into the large ribosomal subunit, where it forms part of the central protuberance. In the 70S ribosome it contacts protein S13 of the 30S subunit (bridge B1b), connecting the 2 subunits; this bridge is implicated in subunit movement. Contacts the P site tRNA; the 5S rRNA and some of its associated proteins might help stabilize positioning of ribosome-bound tRNAs. The protein is Large ribosomal subunit protein uL5 of Synechocystis sp. (strain ATCC 27184 / PCC 6803 / Kazusa).